A 350-amino-acid chain; its full sequence is 5'-tyrosyl-DNA phosphodiesterase (350 aa).

Positions 113–117 (NIDGL) are interaction with 5' end of substrate DNA. Asp-115 and Glu-145 together coordinate Mg(2+). The interaction with 5' end of substrate DNA stretch occupies residues 219–224 (HLESMR). The active-site Proton donor/acceptor is the Asp-258. The interaction with 5' end of substrate DNA stretch occupies residues 260–262 (NLR).

Belongs to the CCR4/nocturin family. TTRAP/TDP2 subfamily. Mg(2+) is required as a cofactor. The cofactor is Mn(2+).

It is found in the nucleus. The protein resides in the PML body. In terms of biological role, DNA repair enzyme that can remove a variety of covalent adducts from DNA through hydrolysis of a 5'-phosphodiester bond, giving rise to DNA with a free 5' phosphate. Catalyzes the hydrolysis of dead-end complexes between DNA and the topoisomerase 2 (top2) active site tyrosine residue. Hydrolyzes 5'-phosphoglycolates on protruding 5' ends on DNA double-strand breaks (DSBs) due to DNA damage by radiation and free radicals. This Caenorhabditis briggsae protein is 5'-tyrosyl-DNA phosphodiesterase.